The primary structure comprises 364 residues: Nucleosome assembly protein 1;2 (364 aa).

Positions 32 to 86 form a coiled coil; sequence VESIKNTLQGLAARHTDVLESLEPKVRKRVEVLREIQSQHDDLEAKFFEERAALE. Residues 53-68 carry the Nuclear export signal motif; that stretch reads LEPKVRKRVEVLREIQ. Residues 227 to 232 carry the Nuclear localization signal motif; it reads KKKPKK. Disordered stretches follow at residues 250 to 269 and 301 to 364; these read FNFF…DEDT and GEAA…CKQQ. Composition is skewed to acidic residues over residues 259 to 269 and 304 to 340; these read PDDDEEIDEDT and AQDE…DDED. At C361 the chain carries Cysteine methyl ester. Residue C361 is the site of S-farnesyl cysteine attachment. Positions 362-364 are cleaved as a propeptide — removed in mature form; that stretch reads KQQ.

This sequence belongs to the nucleosome assembly protein (NAP) family. In terms of assembly, binds preferentially histone H1 in vitro. In terms of tissue distribution, highly expressed in tissues exhibiting active cell-division activities, such as root and shoot meristems and young flowers.

It is found in the nucleus. Its subcellular location is the cytoplasm. May modulate chromatin structure by regulation of nucleosome assembly/disassembly. This is Nucleosome assembly protein 1;2 (NAP1;2) from Oryza sativa subsp. indica (Rice).